Consider the following 325-residue polypeptide: Ribonucleoside-diphosphate reductase small chain (325 aa).

The Fe cation site is built by aspartate 74, glutamate 105, and histidine 108. Tyrosine 112 is a catalytic residue. Fe cation-binding residues include glutamate 168, glutamate 202, and histidine 205.

Belongs to the ribonucleoside diphosphate reductase small chain family. Heterodimer of a large and a small chain. Fe cation serves as cofactor.

It catalyses the reaction a 2'-deoxyribonucleoside 5'-diphosphate + [thioredoxin]-disulfide + H2O = a ribonucleoside 5'-diphosphate + [thioredoxin]-dithiol. In terms of biological role, ribonucleoside-diphosphate reductase holoenzyme provides the precursors necessary for viral DNA synthesis. Allows virus growth in non-dividing cells. Catalyzes the biosynthesis of deoxyribonucleotides from the corresponding ribonucleotides. This is Ribonucleoside-diphosphate reductase small chain from Yaba-like disease virus (YLDV).